Consider the following 309-residue polypeptide: 2-dehydro-3-deoxygluconokinase (309 aa).

Substrate-binding positions include 28-32 (GDTLN), Tyr88, 102-104 (YWR), and Arg170. ATP contacts are provided by residues 168–170 (NYR), 228–233 (KRGADS), and 261–264 (AAGD). Asp264 lines the substrate pocket. The active-site Proton acceptor is the Asp264.

It belongs to the carbohydrate kinase PfkB family.

It carries out the reaction 2-dehydro-3-deoxy-D-gluconate + ATP = 2-dehydro-3-deoxy-6-phospho-D-gluconate + ADP + H(+). It participates in carbohydrate acid metabolism; 2-dehydro-3-deoxy-D-gluconate degradation; D-glyceraldehyde 3-phosphate and pyruvate from 2-dehydro-3-deoxy-D-gluconate: step 1/2. Its function is as follows. Catalyzes the phosphorylation of 2-keto-3-deoxygluconate (KDG) to produce 2-keto-3-deoxy-6-phosphogluconate (KDPG). The chain is 2-dehydro-3-deoxygluconokinase (kdgK) from Escherichia coli (strain K12).